The chain runs to 675 residues: MTTSHMNGHVTEESDSEVKNVDLASPEEHQKHREMAVDCPGDLGTRMMPIRRSAQLERIRQQQEDMRRRREEEGKKQELDLNSSMRLKKLAQIPPKTGIDNPMFDTEEGIVLESPHYAVKILEIEDLFSSLKHIQHTLIDSQSQEDISLLLQLVQNKGFQNAFKIHNAITVHMNKASPPFPLISNAQDLAQEVQTVLKPVHHKEGQELTALLNTPHIQALLLAHDKVAEQEMQLEPITDERVYESIGQYGGETVKIVRIEKARDIPLGATVRNEMDSVIISRIVKGGAAEKSGLLHEGDEVLEINGIEIRGKDVNEVFDLLADMHGTLTFVLIPSQQIKPPPAKETVIHVKAHFDYDPSDDPYVPCRELGLSFQKGDILHVISQEDPNWWQAYREGDEDNQPLAGLVPGKSFQQQREAMKQTIEEDKEPEKSGKLWCAKKNKKKRKKVLYNANKNDDYDNEEILTYEEMSLYHQPANRKRPIILIGPQNCGQNELRQRLMNKEKDRFASAVPHTTRSRRDQEVAGRDYHFVSRQAFEADIAAGKFIEHGEFEKNLYGTSIDSVRQVINSGKICLLSLRTQSLKTLRNSDLKPYIIFIAPPSQERLRALLAKEGKNPKPEELREIIEKTREMEQNNGHYFDTAIVNSDLDKAYQELLRLINKLDTEPQWVPSTWLR.

2 disordered regions span residues 1-34 and 51-78; these read MTTS…KHRE and RRSA…KKQE. A required for the correct localization of PALS1 and PATJ at cell-cell contacts and the normal formation of tight junctions and adherens junctions region spans residues 1 to 345; it reads MTTSHMNGHV…QQIKPPPAKE (345 aa). Basic and acidic residues-rich tracts occupy residues 10–34 and 54–78; these read VTEE…KHRE and AQLE…KKQE. Phosphoserine occurs at positions 14 and 25. Residues 21 to 140 form an interaction with PARD6B region; it reads VDLASPEEHQ…LKHIQHTLID (120 aa). Phosphoserine is present on residues serine 83 and serine 84. 2 L27 domains span residues 120–177 and 179–235; these read KILE…NKAS and PFPL…MQLE. An interaction with LIN7C region spans residues 181-243; sequence PLISNAQDLA…LEPITDERVY (63 aa). Residues 256 to 336 enclose the PDZ domain; sequence IVRIEKARDI…TLTFVLIPSQ (81 aa). Residues 345-417 form the SH3 domain; sequence ETVIHVKAHF…PGKSFQQQRE (73 aa). Residues 479-660 form the Guanylate kinase-like domain; it reads KRPIILIGPQ…AYQELLRLIN (182 aa). 486 to 493 contacts ATP; it reads GPQNCGQN.

This sequence belongs to the MAGUK family. In terms of assembly, heterodimer with MPP1. Forms a heterotrimeric complex composed of PALS1, LIN7B and PATJ; the N-terminal L27 domain of PALS1 interacts with the L27 domain of PATJ and the C-terminal L27 domain of PALS1 interacts with the L27 domain of LIN7B. Component of a complex composed of PALS1, CRB1 and MPP4. Component of a complex whose core is composed of ARHGAP17, AMOT, PALS1, PATJ and PARD3/PAR3. Component of a complex composed of PALS1, CRB1 and EPB41L5. Within the complex, interacts (via HOOK domain) with EPB41L5 (via FERM domain), and interacts with CRB1 (via intracellular domain). Component of a complex composed of PALS1, MPP3 and CRB1; PALS1 acts as a bridging protein between MPP3 (via guanylate kinase-like domain) and CRB1. Component of a complex composed of CRB3, PALS1 and PATJ. As part of the Crumbs complex; interacts with WWP1, the interaction is enhanced by AMOTL2 and facilitates WWP1 localization to the plasma membrane. The Crumbs complex promotes monoubiquitination of AMOTL2 by WWP1, which activates the Hippo signaling pathway. Interacts (via PDZ domain) with PATJ (via N-terminus). Interacts with EZR. Interacts (via PDZ domain) with CRB1 (via C-terminal ERLI motif). While the PDZ domain is sufficient for interaction with CRB1, the adjacent SH3 and guanylate kinase-like domains are likely to contribute to a high affinity interaction. Interacts with WWTR1/TAZ (via WW domain). Interacts with MPP7. Interacts (via PDZ domain) with CRB3 (via C-terminus). Interacts with LIN7C. Interacts with MPDZ. Interacts with PARD6B. Interacts with SC6A1. Interacts with CDH5; the interaction promotes PALS1 localization to cell junctions and is required for CDH5-mediated vascular lumen formation and endothelial cell. Interacts with NPHP1 (via coiled coil and SH3 domains). Interacts with NPHP4. Interacts with CRB2.

It localises to the golgi apparatus. The protein resides in the cell membrane. It is found in the endomembrane system. The protein localises to the cell junction. Its subcellular location is the tight junction. It localises to the adherens junction. The protein resides in the cell projection. It is found in the axon. The protein localises to the perikaryon. Its subcellular location is the apical cell membrane. Its function is as follows. Plays a role in tight junction biogenesis and in the establishment of cell polarity in epithelial cells. Also involved in adherens junction biogenesis by ensuring correct localization of the exocyst complex protein EXOC4/SEC8 which allows trafficking of adherens junction structural component CDH1 to the cell surface. Plays a role through its interaction with CDH5 in vascular lumen formation and endothelial membrane polarity. Required during embryonic and postnatal retinal development. Required for the maintenance of cerebellar progenitor cells in an undifferentiated proliferative state, preventing premature differentiation, and is required for cerebellar histogenesis, fissure formation, cerebellar layer organization and cortical development. Plays a role in neuronal progenitor cell survival, potentially via promotion of mTOR signaling. Plays a role in the radial and longitudinal extension of the myelin sheath in Schwann cells. May modulate SC6A1/GAT1-mediated GABA uptake by stabilizing the transporter. May play a role in the T-cell receptor-mediated activation of NF-kappa-B. Required for localization of EZR to the apical membrane of parietal cells and may play a role in the dynamic remodeling of the apical cytoskeleton. Required for the normal polarized localization of the vesicular marker STX4. Required for the correct trafficking of the myelin proteins PMP22 and MAG. Involved in promoting phosphorylation and cytoplasmic retention of transcriptional coactivators YAP1 and WWTR1/TAZ which leads to suppression of TGFB1-dependent transcription of target genes such as CCN2/CTGF, SERPINE1/PAI1, SNAI1/SNAIL1 and SMAD7. The sequence is that of Protein PALS1 from Pongo abelii (Sumatran orangutan).